A 187-amino-acid chain; its full sequence is Inner membrane-spanning protein YciB (187 aa).

The next 5 membrane-spanning stretches (helical) occupy residues 25-45 (ATGA…ALYK), 50-70 (MQLI…FLHD), 76-96 (WKVT…HVMG), 118-138 (INWA…YVAY), and 148-168 (FKVF…GGYI).

Belongs to the YciB family.

Its subcellular location is the cell inner membrane. Functionally, plays a role in cell envelope biogenesis, maintenance of cell envelope integrity and membrane homeostasis. This is Inner membrane-spanning protein YciB from Vibrio vulnificus (strain CMCP6).